The primary structure comprises 421 residues: D-amino acid dehydrogenase (421 aa).

Residue V3–Y17 participates in FAD binding.

It belongs to the DadA oxidoreductase family. FAD is required as a cofactor.

The enzyme catalyses a D-alpha-amino acid + A + H2O = a 2-oxocarboxylate + AH2 + NH4(+). The protein operates within amino-acid degradation; D-alanine degradation; NH(3) and pyruvate from D-alanine: step 1/1. In terms of biological role, oxidative deamination of D-amino acids. This Methylobacterium nodulans (strain LMG 21967 / CNCM I-2342 / ORS 2060) protein is D-amino acid dehydrogenase.